A 353-amino-acid chain; its full sequence is Nucleotide-binding protein sce5766 (353 aa).

27–34 (GLSGAGKS) lines the ATP pocket. 76 to 79 (DVRV) is a binding site for GTP. The interval 310-353 (SGVPSGVGEGMAGAPGVDLRLAQPGATPSEPRPASDTSVTGGER) is disordered. The span at 344–353 (SDTSVTGGER) shows a compositional bias: polar residues.

It belongs to the RapZ-like family.

Functionally, displays ATPase and GTPase activities. This chain is Nucleotide-binding protein sce5766, found in Sorangium cellulosum (strain So ce56) (Polyangium cellulosum (strain So ce56)).